A 241-amino-acid polypeptide reads, in one-letter code: Meiotically up-regulated gene 130 protein (241 aa).

It is found in the mitochondrion. Has a role in meiosis. This chain is Meiotically up-regulated gene 130 protein (mug130), found in Schizosaccharomyces pombe (strain 972 / ATCC 24843) (Fission yeast).